The sequence spans 158 residues: Na(+)/H(+) antiporter subunit E (158 aa).

2 helical membrane-spanning segments follow: residues 21–41 and 51–71; these read SPSAAGFITGYILGMLSLFFF and LWKLISIIKLCFIFIKELYLA.

The protein belongs to the CPA3 antiporters (TC 2.A.63) subunit E family. Forms a heterooligomeric complex that consists of seven subunits: MrpA, MrpB, MrpC, MrpD, MrpE, MrpF and MrpG.

It is found in the cell membrane. In terms of biological role, mrp complex is a Na(+)/H(+) antiporter that is considered to be the major Na(+) excretion system in B.subtilis. Has a major role in Na(+) resistance and a minor role in Na(+)- and K(+)-dependent pH homeostasis as compared to TetB. MrpA may be the actual Na(+)/H(+) antiporter, although the six other Mrp proteins are all required for Na(+)/H(+) antiport activity and Na(+) resistance. MrpA is required for initiation of sporulation when external Na(+) concentration increases. Also transports Li(+) but not K(+), Ca(2+) or Mg(2+). The chain is Na(+)/H(+) antiporter subunit E (mrpE) from Bacillus subtilis (strain 168).